Reading from the N-terminus, the 185-residue chain is TATA-box-binding protein 3 (185 aa).

Tandem repeats lie at residues 7-84 (IENV…ANKL) and 100-178 (VQNI…RKEF).

Belongs to the TBP family.

General factor that plays a role in the activation of archaeal genes transcribed by RNA polymerase. Binds specifically to the TATA box promoter element which lies close to the position of transcription initiation. The protein is TATA-box-binding protein 3 of Methanosarcina acetivorans (strain ATCC 35395 / DSM 2834 / JCM 12185 / C2A).